We begin with the raw amino-acid sequence, 86 residues long: Neurotoxin LmNaTx17 (86 aa).

The N-terminal stretch at 1–18 (MKILFVIVLAAFFIGVHC) is a signal peptide. An LCN-type CS-alpha/beta domain is found at 19 to 85 (KHGYPVQYSG…TWDYKTGKCR (67 aa)). 4 cysteine pairs are disulfide-bonded: Cys-33–Cys-84, Cys-37–Cys-58, Cys-44–Cys-65, and Cys-48–Cys-67.

This sequence belongs to the long (4 C-C) scorpion toxin superfamily. Sodium channel inhibitor family. Beta subfamily. In terms of tissue distribution, expressed by the venom gland.

The protein localises to the secreted. Its function is as follows. Binds voltage-independently at site-4 of sodium channels (Nav) and shift the voltage of activation toward more negative potentials thereby affecting sodium channel activation and promoting spontaneous and repetitive firing. In Lychas mucronatus (Chinese swimming scorpion), this protein is Neurotoxin LmNaTx17.